The primary structure comprises 237 residues: MAKLTKRQKAQVGKIETTKLYAVDDAIALIKEFAVAKFDESIDVAVQLGVDAKKSDQVVRGAVVMPNGTGKTKRVAVFTQGAKADEARAAGADIVGMDDLAAEVKAGNINFDVVIASPDAMRVVGQLGQILGPRGLMPNPKVGTVTADVATAVRNAKAGQVQFRVDKGGIIHGTIGRRSFDTDKLKGNLQALLDALNKAKPASSKGVYLRKVAVSSTMGVGVRVEVASITAGLAAQS.

Belongs to the universal ribosomal protein uL1 family. As to quaternary structure, part of the 50S ribosomal subunit.

In terms of biological role, binds directly to 23S rRNA. The L1 stalk is quite mobile in the ribosome, and is involved in E site tRNA release. Its function is as follows. Protein L1 is also a translational repressor protein, it controls the translation of the L11 operon by binding to its mRNA. This Leptothrix cholodnii (strain ATCC 51168 / LMG 8142 / SP-6) (Leptothrix discophora (strain SP-6)) protein is Large ribosomal subunit protein uL1.